The chain runs to 295 residues: Shikimate dehydrogenase (NADP(+)) (295 aa).

Shikimate is bound by residues 24 to 26 (SRS) and T71. K75 acts as the Proton acceptor in catalysis. E87 is an NADP(+) binding site. The shikimate site is built by N96 and D111. Residues 136–140 (GAGGA), 160–165 (NRTASR), and M233 contribute to the NADP(+) site. Residue Y235 participates in shikimate binding. G256 contacts NADP(+).

It belongs to the shikimate dehydrogenase family. As to quaternary structure, homodimer.

The catalysed reaction is shikimate + NADP(+) = 3-dehydroshikimate + NADPH + H(+). It participates in metabolic intermediate biosynthesis; chorismate biosynthesis; chorismate from D-erythrose 4-phosphate and phosphoenolpyruvate: step 4/7. Involved in the biosynthesis of the chorismate, which leads to the biosynthesis of aromatic amino acids. Catalyzes the reversible NADPH linked reduction of 3-dehydroshikimate (DHSA) to yield shikimate (SA). In Cupriavidus taiwanensis (strain DSM 17343 / BCRC 17206 / CCUG 44338 / CIP 107171 / LMG 19424 / R1) (Ralstonia taiwanensis (strain LMG 19424)), this protein is Shikimate dehydrogenase (NADP(+)).